Here is a 159-residue protein sequence, read N- to C-terminus: Large ribosomal subunit protein uL15 (159 aa).

Residues 1 to 11 (MKLNELRDNEG) show a composition bias toward basic and acidic residues. The interval 1 to 40 (MKLNELRDNEGARYQSKRLGRGIGSGKGKTSGKGVKGQTS) is disordered. Residues 21 to 35 (RGIGSGKGKTSGKGV) are compositionally biased toward gly residues.

This sequence belongs to the universal ribosomal protein uL15 family. As to quaternary structure, part of the 50S ribosomal subunit.

Its function is as follows. Binds to the 23S rRNA. The chain is Large ribosomal subunit protein uL15 from Paramagnetospirillum magneticum (strain ATCC 700264 / AMB-1) (Magnetospirillum magneticum).